Here is an 860-residue protein sequence, read N- to C-terminus: Nuclear pore complex protein NUP93B (860 aa).

It belongs to the nucleoporin interacting component (NIC) family. Part of the nuclear pore complex (NPC). The NPC has an eight-fold symmetrical structure comprising a central transport channel and two rings, the cytoplasmic and nuclear rings, to which eight filaments are attached. The cytoplasmic filaments have loose ends, while the nuclear filaments are joined in a distal ring, forming a nuclear basket. NPCs are highly dynamic in configuration and composition, and can be devided in 3 subcomplexes, the NUP62 subcomplex, the NUP107-160 subcomplex and the NUP93 subcomplex, containing approximately 30 different nucleoporin proteins.

The protein localises to the nucleus envelope. It localises to the nucleus. Its subcellular location is the nuclear pore complex. This is Nuclear pore complex protein NUP93B from Arabidopsis thaliana (Mouse-ear cress).